Here is a 302-residue protein sequence, read N- to C-terminus: Urease accessory protein UreD 2 (302 aa).

This sequence belongs to the UreD family. In terms of assembly, ureD, UreF and UreG form a complex that acts as a GTP-hydrolysis-dependent molecular chaperone, activating the urease apoprotein by helping to assemble the nickel containing metallocenter of UreC. The UreE protein probably delivers the nickel.

The protein localises to the cytoplasm. Required for maturation of urease via the functional incorporation of the urease nickel metallocenter. This chain is Urease accessory protein UreD 2, found in Brucella canis (strain ATCC 23365 / NCTC 10854 / RM-666).